We begin with the raw amino-acid sequence, 667 residues long: Trifunctional UDP-glucose 4,6-dehydratase/UDP-4-keto-6-deoxy-D-glucose 3,5-epimerase/UDP-4-keto-L-rhamnose-reductase RHM2 (667 aa).

15–21 provides a ligand contact to NAD(+); it reads GAAGFIA. A substrate-binding site is contributed by threonine 134. Aspartate 135 serves as the catalytic Proton donor. Active-site proton acceptor residues include glutamate 136 and tyrosine 161. 389-395 serves as a coordination point for NADP(+); the sequence is GKTGWLG.

It in the N-terminal section; belongs to the NAD(P)-dependent epimerase/dehydratase family. dTDP-glucose dehydratase subfamily. The protein in the C-terminal section; belongs to the dTDP-4-dehydrorhamnose reductase family. It depends on NAD(+) as a cofactor. NADP(+) is required as a cofactor. As to expression, expressed in roots, stems, leaves, seedlings, inflorescence tips, and siliques.

It carries out the reaction UDP-alpha-D-glucose = UDP-4-dehydro-6-deoxy-alpha-D-glucose + H2O. It functions in the pathway carbohydrate biosynthesis. Trifunctional enzyme involved in UDP-beta-L-rhamnose biosynthesis, a precursor of the primary cell wall components rhamnogalacturonan I (RG-I) and rhamnogalacturonan II (RG-II). Catalyzes the dehydration of UDP-glucose to form UDP-4-dehydro-6-deoxy-D-glucose followed by the epimerization of the C3' and C5' positions of UDP-4-dehydro-6-deoxy-D-glucose to form UDP-4-keto-beta-L-rhamnose and the reduction of UDP-4-keto-beta-L-rhamnose to yield UDP-beta-L-rhamnose. Required for the normal seed coat epidermal development. This Arabidopsis thaliana (Mouse-ear cress) protein is Trifunctional UDP-glucose 4,6-dehydratase/UDP-4-keto-6-deoxy-D-glucose 3,5-epimerase/UDP-4-keto-L-rhamnose-reductase RHM2.